The sequence spans 323 residues: Elongation factor P--(R)-beta-lysine ligase (323 aa).

Residue 76 to 78 participates in substrate binding; it reads SPE. ATP is bound by residues 100-102 and asparagine 109; that span reads RNE. Tyrosine 118 contacts substrate. ATP is bound at residue 242–243; it reads EL. Residue glutamate 249 coordinates substrate. An ATP-binding site is contributed by glycine 298.

This sequence belongs to the class-II aminoacyl-tRNA synthetase family. EpmA subfamily. Homodimer.

The catalysed reaction is D-beta-lysine + L-lysyl-[protein] + ATP = N(6)-((3R)-3,6-diaminohexanoyl)-L-lysyl-[protein] + AMP + diphosphate + H(+). Its function is as follows. With EpmB is involved in the beta-lysylation step of the post-translational modification of translation elongation factor P (EF-P). Catalyzes the ATP-dependent activation of (R)-beta-lysine produced by EpmB, forming a lysyl-adenylate, from which the beta-lysyl moiety is then transferred to the epsilon-amino group of a conserved specific lysine residue in EF-P. This Actinobacillus succinogenes (strain ATCC 55618 / DSM 22257 / CCUG 43843 / 130Z) protein is Elongation factor P--(R)-beta-lysine ligase.